The sequence spans 151 residues: MNVINNTLNIKKIFKILPHRYPFLLIDRVLNFEKFKYLQAIKNCSINEPYFQGHFSNEPVFPGVLIIESMAQAASILIYKSTGELNINKLYYFVGVDDTRFKKIAIPGDQIFIKVTILKSNKNILIFKNIAVVNNDIICKSKIVFAKKYLF.

Histidine 54 is an active-site residue.

Belongs to the thioester dehydratase family. FabZ subfamily.

It is found in the cytoplasm. The enzyme catalyses a (3R)-hydroxyacyl-[ACP] = a (2E)-enoyl-[ACP] + H2O. In terms of biological role, involved in unsaturated fatty acids biosynthesis. Catalyzes the dehydration of short chain beta-hydroxyacyl-ACPs and long chain saturated and unsaturated beta-hydroxyacyl-ACPs. The sequence is that of 3-hydroxyacyl-[acyl-carrier-protein] dehydratase FabZ from Buchnera aphidicola subsp. Acyrthosiphon pisum (strain 5A).